Here is a 459-residue protein sequence, read N- to C-terminus: Cyclooctat-9-en-7-ol 5-monooxygenase (459 aa).

Residues Met1–Gly27 are disordered. A heme-binding site is contributed by Cys408.

Belongs to the cytochrome P450 family. Heme is required as a cofactor.

The catalysed reaction is cyclooctat-9-en-7-ol + AH2 + O2 = cyclooctat-9-ene-5,7-diol + A + H2O. Functionally, involved in the biosynthesis of cyclooctatin, a potent inhibitor of lysophospholipase. Catalyzes the stereospecific hydroxylation of cyclooctat-9-en-7-ol to form cyclooctat-9-ene-5,7-diol. This is Cyclooctat-9-en-7-ol 5-monooxygenase from Streptomyces melanosporofaciens.